The primary structure comprises 1044 residues: Isoleucine--tRNA ligase (1044 aa).

Positions 49-59 (PYCSGRIHLGT) match the 'HIGH' region motif. Residues 591-595 (KMSKS) carry the 'KMSKS' region motif. Lysine 594 is a binding site for ATP.

This sequence belongs to the class-I aminoacyl-tRNA synthetase family. IleS type 2 subfamily. As to quaternary structure, monomer. Zn(2+) serves as cofactor.

It is found in the cytoplasm. It catalyses the reaction tRNA(Ile) + L-isoleucine + ATP = L-isoleucyl-tRNA(Ile) + AMP + diphosphate. Catalyzes the attachment of isoleucine to tRNA(Ile). As IleRS can inadvertently accommodate and process structurally similar amino acids such as valine, to avoid such errors it has two additional distinct tRNA(Ile)-dependent editing activities. One activity is designated as 'pretransfer' editing and involves the hydrolysis of activated Val-AMP. The other activity is designated 'posttransfer' editing and involves deacylation of mischarged Val-tRNA(Ile). This chain is Isoleucine--tRNA ligase, found in Methanothermobacter thermautotrophicus (strain ATCC 29096 / DSM 1053 / JCM 10044 / NBRC 100330 / Delta H) (Methanobacterium thermoautotrophicum).